Consider the following 356-residue polypeptide: S-adenosylmethionine:tRNA ribosyltransferase-isomerase (356 aa).

It belongs to the QueA family. In terms of assembly, monomer.

Its subcellular location is the cytoplasm. It carries out the reaction 7-aminomethyl-7-carbaguanosine(34) in tRNA + S-adenosyl-L-methionine = epoxyqueuosine(34) in tRNA + adenine + L-methionine + 2 H(+). Its pathway is tRNA modification; tRNA-queuosine biosynthesis. Transfers and isomerizes the ribose moiety from AdoMet to the 7-aminomethyl group of 7-deazaguanine (preQ1-tRNA) to give epoxyqueuosine (oQ-tRNA). The sequence is that of S-adenosylmethionine:tRNA ribosyltransferase-isomerase from Xanthomonas euvesicatoria pv. vesicatoria (strain 85-10) (Xanthomonas campestris pv. vesicatoria).